We begin with the raw amino-acid sequence, 207 residues long: Small ribosomal subunit protein uS4c (207 aa).

The S4 RNA-binding domain occupies 92-150; sequence MRLDNILFRLGFVPTIPSARQLINHRHILVNNRIVDVPSFHCKPKDIITIGSPKTYQSI.

This sequence belongs to the universal ribosomal protein uS4 family. In terms of assembly, part of the 30S ribosomal subunit. Contacts protein S5. The interaction surface between S4 and S5 is involved in control of translational fidelity.

The protein resides in the plastid. It localises to the chloroplast. Functionally, one of the primary rRNA binding proteins, it binds directly to 16S rRNA where it nucleates assembly of the body of the 30S subunit. With S5 and S12 plays an important role in translational accuracy. This chain is Small ribosomal subunit protein uS4c (rps4), found in Equisetum variegatum (Variegated horsetail).